The chain runs to 188 residues: Acireductone dioxygenase (188 aa).

Fe(2+) is bound by residues His-97, His-99, Glu-103, and His-141. Ni(2+) is bound by residues His-97, His-99, Glu-103, and His-141.

Belongs to the acireductone dioxygenase (ARD) family. In terms of assembly, monomer. Fe(2+) serves as cofactor. Requires Ni(2+) as cofactor.

The catalysed reaction is 1,2-dihydroxy-5-(methylsulfanyl)pent-1-en-3-one + O2 = 3-(methylsulfanyl)propanoate + CO + formate + 2 H(+). It carries out the reaction 1,2-dihydroxy-5-(methylsulfanyl)pent-1-en-3-one + O2 = 4-methylsulfanyl-2-oxobutanoate + formate + 2 H(+). It functions in the pathway amino-acid biosynthesis; L-methionine biosynthesis via salvage pathway; L-methionine from S-methyl-5-thio-alpha-D-ribose 1-phosphate: step 5/6. Catalyzes 2 different reactions between oxygen and the acireductone 1,2-dihydroxy-3-keto-5-methylthiopentene (DHK-MTPene) depending upon the metal bound in the active site. Fe-containing acireductone dioxygenase (Fe-ARD) produces formate and 2-keto-4-methylthiobutyrate (KMTB), the alpha-ketoacid precursor of methionine in the methionine recycle pathway. Ni-containing acireductone dioxygenase (Ni-ARD) produces methylthiopropionate, carbon monoxide and formate, and does not lie on the methionine recycle pathway. The protein is Acireductone dioxygenase of Xylella fastidiosa (strain 9a5c).